Reading from the N-terminus, the 403-residue chain is S-adenosylmethionine synthase (403 aa).

His17 is an ATP binding site. Asp19 provides a ligand contact to Mg(2+). Glu45 provides a ligand contact to K(+). L-methionine contacts are provided by Glu58 and Gln104. Residues 104 to 114 (QSPDIAQGVDT) are flexible loop. ATP contacts are provided by residues 179–181 (DGK), 250–251 (KF), Asp259, 265–266 (RK), Ala282, and Lys286. L-methionine is bound at residue Asp259. Lys290 provides a ligand contact to L-methionine.

Belongs to the AdoMet synthase family. Homotetramer; dimer of dimers. The cofactor is Mg(2+). K(+) is required as a cofactor.

The protein resides in the cytoplasm. The catalysed reaction is L-methionine + ATP + H2O = S-adenosyl-L-methionine + phosphate + diphosphate. Its pathway is amino-acid biosynthesis; S-adenosyl-L-methionine biosynthesis; S-adenosyl-L-methionine from L-methionine: step 1/1. In terms of biological role, catalyzes the formation of S-adenosylmethionine (AdoMet) from methionine and ATP. The overall synthetic reaction is composed of two sequential steps, AdoMet formation and the subsequent tripolyphosphate hydrolysis which occurs prior to release of AdoMet from the enzyme. The sequence is that of S-adenosylmethionine synthase from Mycobacterium avium (strain 104).